The chain runs to 364 residues: Aminomethyltransferase (364 aa).

Belongs to the GcvT family. In terms of assembly, the glycine cleavage system is composed of four proteins: P, T, L and H.

It catalyses the reaction N(6)-[(R)-S(8)-aminomethyldihydrolipoyl]-L-lysyl-[protein] + (6S)-5,6,7,8-tetrahydrofolate = N(6)-[(R)-dihydrolipoyl]-L-lysyl-[protein] + (6R)-5,10-methylene-5,6,7,8-tetrahydrofolate + NH4(+). Functionally, the glycine cleavage system catalyzes the degradation of glycine. The protein is Aminomethyltransferase of Escherichia coli (strain SMS-3-5 / SECEC).